The following is a 90-amino-acid chain: DNA-directed RNA polymerase subunit omega (90 aa).

Positions 69-90 are disordered; the sequence is RQEQQEQDAAELAAVSSITHNR.

This sequence belongs to the RNA polymerase subunit omega family. As to quaternary structure, the RNAP catalytic core consists of 2 alpha, 1 beta, 1 beta' and 1 omega subunit. When a sigma factor is associated with the core the holoenzyme is formed, which can initiate transcription.

It catalyses the reaction RNA(n) + a ribonucleoside 5'-triphosphate = RNA(n+1) + diphosphate. Its function is as follows. Promotes RNA polymerase assembly. Latches the N- and C-terminal regions of the beta' subunit thereby facilitating its interaction with the beta and alpha subunits. The protein is DNA-directed RNA polymerase subunit omega of Aliivibrio salmonicida (strain LFI1238) (Vibrio salmonicida (strain LFI1238)).